A 156-amino-acid polypeptide reads, in one-letter code: Small ribosomal subunit protein uS7 (156 aa).

It belongs to the universal ribosomal protein uS7 family. Part of the 30S ribosomal subunit. Contacts proteins S9 and S11.

Its function is as follows. One of the primary rRNA binding proteins, it binds directly to 16S rRNA where it nucleates assembly of the head domain of the 30S subunit. Is located at the subunit interface close to the decoding center, probably blocks exit of the E-site tRNA. This is Small ribosomal subunit protein uS7 from Synechococcus sp. (strain WH7803).